A 213-amino-acid polypeptide reads, in one-letter code: Holliday junction resolvase RecU (213 aa).

The Mg(2+) site is built by T98, D100, E113, and Q132.

Belongs to the RecU family. Requires Mg(2+) as cofactor.

It is found in the cytoplasm. The enzyme catalyses Endonucleolytic cleavage at a junction such as a reciprocal single-stranded crossover between two homologous DNA duplexes (Holliday junction).. Its function is as follows. Endonuclease that resolves Holliday junction intermediates in genetic recombination. Cleaves mobile four-strand junctions by introducing symmetrical nicks in paired strands. Promotes annealing of linear ssDNA with homologous dsDNA. Required for DNA repair, homologous recombination and chromosome segregation. The protein is Holliday junction resolvase RecU of Ligilactobacillus salivarius (strain UCC118) (Lactobacillus salivarius).